Reading from the N-terminus, the 56-residue chain is Large ribosomal subunit protein bL32 (56 aa).

Belongs to the bacterial ribosomal protein bL32 family.

This chain is Large ribosomal subunit protein bL32, found in Bacillus cereus (strain ATCC 14579 / DSM 31 / CCUG 7414 / JCM 2152 / NBRC 15305 / NCIMB 9373 / NCTC 2599 / NRRL B-3711).